A 146-amino-acid chain; its full sequence is Phospholipase A2 PS22 (146 aa).

The N-terminal stretch at 1 to 19 (MYPAHLLVLLAVCVSLLGA) is a signal peptide. Residues 20-27 (ASVPPQPL) constitute a propeptide that is removed on maturation. 7 disulfide bridges follow: C38/C98, C54/C145, C56/C72, C71/C126, C78/C119, C87/C112, and C105/C117. Ca(2+) is bound by residues Y55, G57, and G59. H75 is an active-site residue. D76 provides a ligand contact to Ca(2+). The active site involves D120.

Belongs to the phospholipase A2 family. Group I subfamily. D49 sub-subfamily. It depends on Ca(2+) as a cofactor. In terms of tissue distribution, expressed by the venom gland.

It localises to the secreted. The catalysed reaction is a 1,2-diacyl-sn-glycero-3-phosphocholine + H2O = a 1-acyl-sn-glycero-3-phosphocholine + a fatty acid + H(+). Snake venom phospholipase A2 (PLA2) that inhibits collagen-induced platelet aggregation. PLA2 catalyzes the calcium-dependent hydrolysis of the 2-acyl groups in 3-sn-phosphoglycerides. This is Phospholipase A2 PS22 from Drysdalia coronoides (White-lipped snake).